We begin with the raw amino-acid sequence, 329 residues long: MQGSVTEFLKPRLVDIEQVSSTHAKVTLEPLERGFGHTLGNALRRILLSSMPGCAVTEVEIDGVLHEYSTKEGVQEDILEILLNLKGLAVRVQGKDEVILTLNKSGIGPVTAADITHDGDVEIVKPQHVICHLTDENASISMRIKVRRGRGYVPASTRIHSEEDERPIGRLLVDACYSPVERIAYNVEAARVEQRTDLDKLVIEMETNGTIDPEEAIRRAATILAEQLEAFVDLRDVRQPEVKEEKPEFDPILLRPVDDLELTVRSANCLKAEAIHYIGDLVQRTEVELLKTPNLGKKSLTEIKDVLASRGLSLGMRLENWPPASIADE.

The segment at 1-235 is alpha N-terminal domain (alpha-NTD); the sequence is MQGSVTEFLK…EQLEAFVDLR (235 aa). The alpha C-terminal domain (alpha-CTD) stretch occupies residues 249–329; the sequence is FDPILLRPVD…NWPPASIADE (81 aa).

Belongs to the RNA polymerase alpha chain family. Homodimer. The RNAP catalytic core consists of 2 alpha, 1 beta, 1 beta' and 1 omega subunit. When a sigma factor is associated with the core the holoenzyme is formed, which can initiate transcription.

The enzyme catalyses RNA(n) + a ribonucleoside 5'-triphosphate = RNA(n+1) + diphosphate. Its function is as follows. DNA-dependent RNA polymerase catalyzes the transcription of DNA into RNA using the four ribonucleoside triphosphates as substrates. The protein is DNA-directed RNA polymerase subunit alpha of Shigella dysenteriae serotype 1 (strain Sd197).